Consider the following 434-residue polypeptide: Exopolygalacturonase X-1 (434 aa).

The N-terminal stretch at 1-22 is a signal peptide; sequence MKLSHLLTSAVSVLSLGLTVEG. Asn113, Asn129, and Asn199 each carry an N-linked (GlcNAc...) asparagine glycan. Residues 231–252 form a PbH1 1 repeat; that stretch reads SKNIVIQNSVINNGDDCVSFKP. Residue Asp245 is the Proton donor of the active site. Residues Cys247 and Cys264 are joined by a disulfide bond. N-linked (GlcNAc...) asparagine glycans are attached at residues Asn253 and Asn265. A PbH1 2 repeat occupies 254–274; that stretch reads STEILVQNLYCNGSHGISVGS. Residue His268 is part of the active site. Asn292, Asn297, Asn329, Asn354, and Asn364 each carry an N-linked (GlcNAc...) asparagine glycan. One copy of the PbH1 3 repeat lies at 327–348; it reads VSNITYEDMYIENVDWAIEITQ. Residues 362–405 form a PbH1 4 repeat; sequence PSNLTISDVYISNMYGTTSSARDPNIGTIVCSSPDVCSNIYVEN. Cys392 and Cys398 are disulfide-bonded. N-linked (GlcNAc...) asparagine glycosylation is found at Asn423 and Asn430.

The protein belongs to the glycosyl hydrolase 28 family.

It localises to the secreted. It carries out the reaction [(1-&gt;4)-alpha-D-galacturonosyl](n) + H2O = alpha-D-galacturonate + [(1-&gt;4)-alpha-D-galacturonosyl](n-1). Functionally, specific in hydrolyzing the terminal glycosidic bond of polygalacturonic acid and oligogalacturonates. The chain is Exopolygalacturonase X-1 (pgaX-1) from Emericella nidulans (strain FGSC A4 / ATCC 38163 / CBS 112.46 / NRRL 194 / M139) (Aspergillus nidulans).